Consider the following 1402-residue polypeptide: Transcription elongation factor spt-6 (1402 aa).

Residues 1 to 199 (MSNSMRDLID…PKDRGLNIDT (199 aa)) form a disordered region. Acidic residues-rich tracts occupy residues 10–28 (DGEA…DEEA), 40–52 (DSSE…EDEE), 62–75 (IVDE…EDSD), and 90–102 (EEEE…DLDL). Residues 123–135 (HRDDHRPTERRGL) are compositionally biased toward basic and acidic residues. The segment covering 161–176 (DEFDDFIEDDYPEDDE) has biased composition (acidic residues). Basic and acidic residues predominate over residues 177–199 (ERRHREEDEEVARPKDRGLNIDT). Residues 1094-1161 (GMIVAANVRV…KEFVSKLSMR (68 aa)) enclose the S1 motif domain. An SH2 domain is found at 1209-1306 (PLFKPFNSTQ…KKVDELMQCD (98 aa)).

This sequence belongs to the SPT6 family.

The protein localises to the nucleus. Its subcellular location is the chromosome. Functionally, histone H3-H4 chaperone that plays a role in maintenance of chromatin structure during RNA polymerase II transcription elongation thereby repressing transcription initiation from cryptic promoters. Mediates the reassembly of nucleosomes onto the promoters of at least a selected set of genes during repression; the nucleosome reassembly is essential for transcriptional repression. Essential for viability. The chain is Transcription elongation factor spt-6 (spt-6) from Neurospora crassa (strain ATCC 24698 / 74-OR23-1A / CBS 708.71 / DSM 1257 / FGSC 987).